A 906-amino-acid polypeptide reads, in one-letter code: Probable disease resistance RPP8-like protein 2 (906 aa).

Positions Glu-15–Ile-68 form a coiled coil. The NB-ARC domain occupies Leu-144–Asp-454. Gly-190–Thr-197 provides a ligand contact to ATP. LRR repeat units follow at residues Leu-573–Asp-597, Leu-598–Leu-621, Leu-623–Lys-644, Met-646–Asn-671, Leu-672–Val-696, Glu-704–Asp-727, Leu-740–Phe-766, Pro-767–Lys-790, Leu-791–Gln-818, and Met-840–Thr-865.

Belongs to the disease resistance NB-LRR family. RPP8/HRT subfamily.

Potential disease resistance protein. This is Probable disease resistance RPP8-like protein 2 (RPP8L2) from Arabidopsis thaliana (Mouse-ear cress).